We begin with the raw amino-acid sequence, 511 residues long: Bifunctional purine biosynthesis protein PurH (511 aa).

Residues 1-145 (MKKRALVSVS…KNHKFVSVIV (145 aa)) enclose the MGS-like domain.

It belongs to the PurH family.

It catalyses the reaction (6R)-10-formyltetrahydrofolate + 5-amino-1-(5-phospho-beta-D-ribosyl)imidazole-4-carboxamide = 5-formamido-1-(5-phospho-D-ribosyl)imidazole-4-carboxamide + (6S)-5,6,7,8-tetrahydrofolate. It carries out the reaction IMP + H2O = 5-formamido-1-(5-phospho-D-ribosyl)imidazole-4-carboxamide. The protein operates within purine metabolism; IMP biosynthesis via de novo pathway; 5-formamido-1-(5-phospho-D-ribosyl)imidazole-4-carboxamide from 5-amino-1-(5-phospho-D-ribosyl)imidazole-4-carboxamide (10-formyl THF route): step 1/1. Its pathway is purine metabolism; IMP biosynthesis via de novo pathway; IMP from 5-formamido-1-(5-phospho-D-ribosyl)imidazole-4-carboxamide: step 1/1. This chain is Bifunctional purine biosynthesis protein PurH, found in Bacillus cereus (strain ZK / E33L).